The primary structure comprises 259 residues: Phosphate import ATP-binding protein PstB (259 aa).

One can recognise an ABC transporter domain in the interval 6–254 (SKNESVVFDV…PKDKRTEDYI (249 aa)). 45–52 (GPSGCGKS) contacts ATP.

It belongs to the ABC transporter superfamily. Phosphate importer (TC 3.A.1.7) family. As to quaternary structure, the complex is composed of two ATP-binding proteins (PstB), two transmembrane proteins (PstC and PstA) and a solute-binding protein (PstS).

The protein resides in the cell membrane. It catalyses the reaction phosphate(out) + ATP + H2O = ADP + 2 phosphate(in) + H(+). Functionally, part of the ABC transporter complex PstSACB involved in phosphate import. Responsible for energy coupling to the transport system. This chain is Phosphate import ATP-binding protein PstB, found in Desulfitobacterium hafniense (strain Y51).